We begin with the raw amino-acid sequence, 408 residues long: Beta-ureidopropionase (408 aa).

The 271-residue stretch at 90-360 folds into the CN hydrolase domain; sequence VRVGLIQNSI…DGLLISDMDL (271 aa). E137 (proton acceptor) is an active-site residue. Residue K212 is the Proton donor of the active site. The active-site Nucleophile is C249.

It belongs to the carbon-nitrogen hydrolase superfamily. BUP family. Homodimer, homotetramer, homooctamer; can also form higher homooligomers.

The protein localises to the cytoplasm. The enzyme catalyses 3-(carbamoylamino)propanoate + H2O + 2 H(+) = beta-alanine + NH4(+) + CO2. The catalysed reaction is 3-(carbamoylamino)-2-methylpropanoate + H2O + 2 H(+) = (R)-3-amino-2-methylpropanoate + NH4(+) + CO2. It functions in the pathway amino-acid biosynthesis; beta-alanine biosynthesis. In terms of biological role, catalyzes a late step in pyrimidine degradation. Converts N-carbamoyl-beta-aminoisobutyrate and N-carbamoyl-beta-alanine (3-ureidopropanoate) to, respectively, beta-aminoisobutyrate and beta-alanine, ammonia and carbon dioxide. Involved in the recycling of nitrogen from nucleobases to general nitrogen metabolism. The chain is Beta-ureidopropionase from Arabidopsis thaliana (Mouse-ear cress).